A 440-amino-acid chain; its full sequence is Amino acid transporter AVT6D (440 aa).

Transmembrane regions (helical) follow at residues 26 to 46 (FAGAVFNISTSIVGAGIMAIP), 47 to 67 (AAFKVLGVIPSLSIIVIIAWL), 102 to 122 (AVTVVTMVVTFGSMIIFSIII), 149 to 169 (WNTRFFGLLFIFVFLFLPLVL), 182 to 202 (ISFLLALLFVVISSVLAIIAL), 219 to 239 (GGLSFFSLFTASPVIVTAFTF), 262 to 282 (ISVILCATIYSATGLFCYLLF), 309 to 329 (IVRLSYAIHLMLVFPLLNFSL), 356 to 376 (FPLLISCFLGAIAIPDIWYFF), 377 to 397 (QFLGSTSTVSIAFIFPAAIVL), and 410 to 430 (IVASVMLVLAVATSIIAISTN).

This sequence belongs to the amino acid/polyamine transporter 2 family. Amino acid/auxin permease (AAAP) (TC 2.A.18.6) subfamily.

It localises to the membrane. The protein is Amino acid transporter AVT6D of Arabidopsis thaliana (Mouse-ear cress).